Consider the following 267-residue polypeptide: MFKLDLQPSEKLFIPFITAGDPVPEVSIELAKSLQKAGATALELGVAYSDPLADGPVIQRASKRALDQGMNIVKAIELGGEMKKNGVNIPIILFTYYNPVLQLNKEYFFALLRENHIDGLLVPDLPLEESNSLQEECKSHEVTYISLVAPTSESRLKTIIEQAEGFVYCVSSLGVTGVRNEFNSSVYPFIRTVKNLSTVPVAVGFGISNREQVIKMNEISDGVVVGSALVRKIEELKDRLISAETRNQALQEFEDYAMAFSGLYSLK.

Residues glutamate 43 and aspartate 54 each act as proton acceptor in the active site.

Belongs to the TrpA family. As to quaternary structure, tetramer of two alpha and two beta chains.

It catalyses the reaction (1S,2R)-1-C-(indol-3-yl)glycerol 3-phosphate + L-serine = D-glyceraldehyde 3-phosphate + L-tryptophan + H2O. Its pathway is amino-acid biosynthesis; L-tryptophan biosynthesis; L-tryptophan from chorismate: step 5/5. In terms of biological role, the alpha subunit is responsible for the aldol cleavage of indoleglycerol phosphate to indole and glyceraldehyde 3-phosphate. This Bacillus subtilis (strain 168) protein is Tryptophan synthase alpha chain.